The primary structure comprises 150 residues: UPF0756 membrane protein Dd1591_2981 (150 aa).

4 helical membrane-spanning segments follow: residues 10–32 (ILLA…AILF), 51–71 (YGLS…IASG), 88–108 (LMAV…VVLM), and 127–147 (ALFR…SLLI).

It belongs to the UPF0756 family.

It localises to the cell membrane. This chain is UPF0756 membrane protein Dd1591_2981, found in Dickeya chrysanthemi (strain Ech1591) (Dickeya zeae (strain Ech1591)).